Reading from the N-terminus, the 483-residue chain is Glutamyl-tRNA(Gln) amidotransferase subunit A (483 aa).

Catalysis depends on charge relay system residues Lys-76 and Ser-151. The active-site Acyl-ester intermediate is Ser-175.

It belongs to the amidase family. GatA subfamily. In terms of assembly, heterotrimer of A, B and C subunits.

It catalyses the reaction L-glutamyl-tRNA(Gln) + L-glutamine + ATP + H2O = L-glutaminyl-tRNA(Gln) + L-glutamate + ADP + phosphate + H(+). Functionally, allows the formation of correctly charged Gln-tRNA(Gln) through the transamidation of misacylated Glu-tRNA(Gln) in organisms which lack glutaminyl-tRNA synthetase. The reaction takes place in the presence of glutamine and ATP through an activated gamma-phospho-Glu-tRNA(Gln). This Pseudomonas syringae pv. syringae (strain B728a) protein is Glutamyl-tRNA(Gln) amidotransferase subunit A.